The chain runs to 415 residues: 1-deoxy-D-xylulose 5-phosphate reductoisomerase (415 aa).

NADPH is bound by residues T10, G11, S12, I13, G36, R37, N38, and N128. K129 contacts 1-deoxy-D-xylulose 5-phosphate. An NADPH-binding site is contributed by E130. A Mn(2+)-binding site is contributed by D154. S155, E156, S192, and H215 together coordinate 1-deoxy-D-xylulose 5-phosphate. Residue E156 coordinates Mn(2+). Residue G221 participates in NADPH binding. 4 residues coordinate 1-deoxy-D-xylulose 5-phosphate: S228, N233, K234, and E237. E237 provides a ligand contact to Mn(2+).

Belongs to the DXR family. Mg(2+) is required as a cofactor. It depends on Mn(2+) as a cofactor.

The catalysed reaction is 2-C-methyl-D-erythritol 4-phosphate + NADP(+) = 1-deoxy-D-xylulose 5-phosphate + NADPH + H(+). It participates in isoprenoid biosynthesis; isopentenyl diphosphate biosynthesis via DXP pathway; isopentenyl diphosphate from 1-deoxy-D-xylulose 5-phosphate: step 1/6. Catalyzes the NADPH-dependent rearrangement and reduction of 1-deoxy-D-xylulose-5-phosphate (DXP) to 2-C-methyl-D-erythritol 4-phosphate (MEP). This Synechococcus sp. (strain CC9605) protein is 1-deoxy-D-xylulose 5-phosphate reductoisomerase.